A 149-amino-acid chain; its full sequence is Major outer capsid protein (149 aa).

Homotrimer.

Its subcellular location is the virion. Its function is as follows. Assembles to form an icosahedral capsid with a T=13 symmetry. Drives the penetration of the inner capsid (core) into the cytoplasm. This Pseudomonas phage phi6 (Bacteriophage phi-6) protein is Major outer capsid protein (P8).